The chain runs to 189 residues: Cytidylate kinase (189 aa).

7 to 15 (GPPGSGKTS) lines the ATP pocket.

Belongs to the cytidylate kinase family. Type 2 subfamily.

The protein resides in the cytoplasm. It carries out the reaction CMP + ATP = CDP + ADP. The enzyme catalyses dCMP + ATP = dCDP + ADP. The protein is Cytidylate kinase of Saccharolobus islandicus (strain Y.N.15.51 / Yellowstone #2) (Sulfolobus islandicus).